Consider the following 338-residue polypeptide: Ketol-acid reductoisomerase (NADP(+)) (338 aa).

One can recognise a KARI N-terminal Rossmann domain in the interval 1–181 (MKIYYDKDCN…GGGRAGIIET (181 aa)). Residues 24 to 27 (YGSQ), Arg-47, Ser-50, Ser-52, and 82 to 85 (DETQ) contribute to the NADP(+) site. Residue His-107 is part of the active site. Gly-133 provides a ligand contact to NADP(+). The region spanning 182–327 (SFKEETETDL…ARLRSMMSWI (146 aa)) is the KARI C-terminal knotted domain. The Mg(2+) site is built by Asp-190, Glu-194, Glu-226, and Glu-230. Ser-251 serves as a coordination point for substrate.

The protein belongs to the ketol-acid reductoisomerase family. Mg(2+) is required as a cofactor.

It catalyses the reaction (2R)-2,3-dihydroxy-3-methylbutanoate + NADP(+) = (2S)-2-acetolactate + NADPH + H(+). The catalysed reaction is (2R,3R)-2,3-dihydroxy-3-methylpentanoate + NADP(+) = (S)-2-ethyl-2-hydroxy-3-oxobutanoate + NADPH + H(+). The protein operates within amino-acid biosynthesis; L-isoleucine biosynthesis; L-isoleucine from 2-oxobutanoate: step 2/4. It functions in the pathway amino-acid biosynthesis; L-valine biosynthesis; L-valine from pyruvate: step 2/4. Involved in the biosynthesis of branched-chain amino acids (BCAA). Catalyzes an alkyl-migration followed by a ketol-acid reduction of (S)-2-acetolactate (S2AL) to yield (R)-2,3-dihydroxy-isovalerate. In the isomerase reaction, S2AL is rearranged via a Mg-dependent methyl migration to produce 3-hydroxy-3-methyl-2-ketobutyrate (HMKB). In the reductase reaction, this 2-ketoacid undergoes a metal-dependent reduction by NADPH to yield (R)-2,3-dihydroxy-isovalerate. This chain is Ketol-acid reductoisomerase (NADP(+)), found in Geobacter metallireducens (strain ATCC 53774 / DSM 7210 / GS-15).